Reading from the N-terminus, the 359-residue chain is Protein RecA (359 aa).

Position 64–71 (64–71 (GHESSGKT)) interacts with ATP. The interval 329 to 359 (KYSNKDSNDSPKEGSKIKTKVNPAVTQDELI) is disordered. Residues 331–344 (SNKDSNDSPKEGSK) show a composition bias toward basic and acidic residues.

This sequence belongs to the RecA family.

Its subcellular location is the cytoplasm. In terms of biological role, can catalyze the hydrolysis of ATP in the presence of single-stranded DNA, the ATP-dependent uptake of single-stranded DNA by duplex DNA, and the ATP-dependent hybridization of homologous single-stranded DNAs. It interacts with LexA causing its activation and leading to its autocatalytic cleavage. The chain is Protein RecA from Francisella tularensis subsp. tularensis (strain FSC 198).